We begin with the raw amino-acid sequence, 335 residues long: Proline racemase (335 aa).

Cys91 (proton acceptor) is an active-site residue. Residue Cys255 is the Proton donor of the active site.

Belongs to the proline racemase family. Homodimer.

The catalysed reaction is L-proline = D-proline. Its function is as follows. Catalyzes the reversible interconversion of L- and D-proline. Plays an important role in the regulation of intra- and extracellular amino acid pools, allowing the bacterium to profit from host precursors and enzymatic pathways. Strong B-cell mitogen. This chain is Proline racemase, found in Clostridioides difficile (strain 630) (Peptoclostridium difficile).